The primary structure comprises 605 residues: Probable potassium transport system protein Kup 3 (605 aa).

12 helical membrane-spanning segments follow: residues 16–36 (ALGL…TVIF), 49–69 (ILSL…AWLA), 97–117 (VAFA…DAVI), 138–158 (GLST…LFSV), 170–190 (FGPI…VSAF), 212–232 (GLAG…GEAL), 247–267 (AWHF…VFAI), 287–307 (LYIP…QAII), 339–359 (IYLG…MLVF), 368–388 (AYGM…IIVF), 397–417 (ALVA…TFSK), and 418–438 (LPHG…TIII).

This sequence belongs to the HAK/KUP transporter (TC 2.A.72) family.

It is found in the cell inner membrane. It carries out the reaction K(+)(in) + H(+)(in) = K(+)(out) + H(+)(out). Functionally, transport of potassium into the cell. Likely operates as a K(+):H(+) symporter. The sequence is that of Probable potassium transport system protein Kup 3 from Geobacter sulfurreducens (strain ATCC 51573 / DSM 12127 / PCA).